We begin with the raw amino-acid sequence, 1153 residues long: PPi-type phosphoenolpyruvate carboxykinase 2 (1153 aa).

Positions 1085–1131 form a coiled coil; the sequence is RQKLEVAKLNKDLAYLNKTIAEKPRLVETLNKQIAAVKEELQYVSSE.

Belongs to the PPi-type phosphoenolpyruvate carboxykinase family. In terms of assembly, monomer and trimer; forms heterotrimers with PEPCK1 and PEPCK3.

Its subcellular location is the cytoplasm. It localises to the cytosol. It carries out the reaction oxaloacetate + diphosphate = phosphoenolpyruvate + phosphate + CO2. In terms of biological role, inorganic pyrophosphate (PPi)-dependent phosphoenolpyruvate carboxykinase, which regulates the carbon flow of the central metabolism by fixing CO(2) to phosphoenolpyruvate to produce oxaloacetate. Can also produce pyruvate and diphosphate from phosphoenolpyruvate and phosphate. This Entamoeba histolytica (strain ATCC 30459 / HM-1:IMSS / ABRM) protein is PPi-type phosphoenolpyruvate carboxykinase 2.